The following is a 122-amino-acid chain: Holo-[acyl-carrier-protein] synthase (122 aa).

The Mg(2+) site is built by aspartate 8 and glutamate 60.

This sequence belongs to the P-Pant transferase superfamily. AcpS family. It depends on Mg(2+) as a cofactor.

It localises to the cytoplasm. It catalyses the reaction apo-[ACP] + CoA = holo-[ACP] + adenosine 3',5'-bisphosphate + H(+). Functionally, transfers the 4'-phosphopantetheine moiety from coenzyme A to a Ser of acyl-carrier-protein. The chain is Holo-[acyl-carrier-protein] synthase from Anaplasma phagocytophilum (strain HZ).